Consider the following 169-residue polypeptide: Probable phospholipid hydroperoxide glutathione peroxidase (169 aa).

Cys43 is a catalytic residue.

It belongs to the glutathione peroxidase family. Germinating seed, apex, flower, as well as in stressed tissues.

The protein resides in the cytoplasm. It catalyses the reaction a hydroperoxy polyunsaturated fatty acid + 2 glutathione = a hydroxy polyunsaturated fatty acid + glutathione disulfide + H2O. Its function is as follows. Protects cells and enzymes from oxidative damage, by catalyzing the reduction of hydrogen peroxide, lipid peroxides and organic hydroperoxide, by glutathione. The chain is Probable phospholipid hydroperoxide glutathione peroxidase from Nicotiana sylvestris (Wood tobacco).